A 344-amino-acid chain; its full sequence is Tetraacyldisaccharide 4'-kinase (344 aa).

Position 65-72 (65-72 (HAGGTGKT)) interacts with ATP.

This sequence belongs to the LpxK family.

It carries out the reaction a lipid A disaccharide + ATP = a lipid IVA + ADP + H(+). It functions in the pathway glycolipid biosynthesis; lipid IV(A) biosynthesis; lipid IV(A) from (3R)-3-hydroxytetradecanoyl-[acyl-carrier-protein] and UDP-N-acetyl-alpha-D-glucosamine: step 6/6. In terms of biological role, transfers the gamma-phosphate of ATP to the 4'-position of a tetraacyldisaccharide 1-phosphate intermediate (termed DS-1-P) to form tetraacyldisaccharide 1,4'-bis-phosphate (lipid IVA). This chain is Tetraacyldisaccharide 4'-kinase, found in Neisseria meningitidis serogroup C / serotype 2a (strain ATCC 700532 / DSM 15464 / FAM18).